Reading from the N-terminus, the 534-residue chain is Lysophosphatidylcholine acyltransferase 1 (534 aa).

A disordered region spans residues 1-22 (MRLRGCGPRAAPASSAGASDAR). The Cytoplasmic segment spans residues 1–57 (MRLRGCGPRAAPASSAGASDARLLAPPGRNPFVHELRLSALQKAQVALMTLTLFPVR). Low complexity predominate over residues 7–22 (GPRAAPASSAGASDAR). Residues 58-78 (LLVAAAMMLLAWPLALVASLG) traverse the membrane as a helical; Signal-anchor for type II membrane protein segment. Residues 79–534 (SAEKEPEQPP…GRKPVRKKLD (456 aa)) are Lumenal-facing. An HXXXXD motif motif is present at residues 135-140 (HSSYFD). 2 consecutive EF-hand domains span residues 379 to 414 (PVSD…VCRP) and 451 to 486 (VAEL…YPAF). Residues aspartate 392, serine 394, serine 396, glutamate 398, and glutamate 403 each coordinate Ca(2+). Residues 512–534 (GFCADFSPENSDAGRKPVRKKLD) form a disordered region. Residues 523-534 (DAGRKPVRKKLD) are compositionally biased toward basic and acidic residues. Residues 531-534 (KKLD) carry the Di-lysine motif motif.

This sequence belongs to the 1-acyl-sn-glycerol-3-phosphate acyltransferase family. In terms of tissue distribution, erythrocytes.

It localises to the endoplasmic reticulum membrane. Its subcellular location is the golgi apparatus membrane. The protein localises to the cell membrane. The protein resides in the lipid droplet. The catalysed reaction is a 1-acyl-sn-glycero-3-phosphocholine + an acyl-CoA = a 1,2-diacyl-sn-glycero-3-phosphocholine + CoA. It catalyses the reaction a 1-acyl-sn-glycero-3-phosphate + an acyl-CoA = a 1,2-diacyl-sn-glycero-3-phosphate + CoA. It carries out the reaction a 1-O-alkyl-sn-glycero-3-phosphocholine + acetyl-CoA = a 1-O-alkyl-2-acetyl-sn-glycero-3-phosphocholine + CoA. The enzyme catalyses a 1-O-(1Z-alkenyl)-sn-glycero-3-phosphocholine + an acyl-CoA = a 1-O-(1Z-alkenyl)-2-acyl-sn-glycero-3-phosphocholine + CoA. The catalysed reaction is 1-acyl-sn-glycero-3-phospho-(1'-sn-glycerol) + an acyl-CoA = a 1,2-diacyl-sn-glycero-3-phospho-(1'-sn-glycerol) + CoA. It catalyses the reaction 1-hexadecanoyl-sn-glycero-3-phosphocholine + (9Z)-octadecenoyl-CoA = 1-hexadecanoyl-2-(9Z-octadecenoyl)-sn-glycero-3-phosphocholine + CoA. It carries out the reaction 1-hexadecanoyl-sn-glycero-3-phosphocholine + hexadecanoyl-CoA = 1,2-dihexadecanoyl-sn-glycero-3-phosphocholine + CoA. The enzyme catalyses 1-O-hexadecyl-sn-glycero-3-phosphocholine + hexadecanoyl-CoA = 1-O-hexadecyl-2-hexadecanoyl-sn-glycero-3-phosphocholine + CoA. The catalysed reaction is a 1-O-(1Z-alkenyl)-sn-glycero-3-phosphocholine + hexadecanoyl-CoA = 1-O-(1Z)-alkenyl-2-hexadecanoyl-sn-glycero-3-phosphocholine + CoA. It catalyses the reaction 1-hexadecanoyl-sn-glycero-3-phospho-(1'-sn-glycerol) + hexadecanoyl-CoA = 1,2-dihexadecanoyl-sn-glycero-3-phospho-(1'-sn-glycerol) + CoA. It carries out the reaction 1-dodecanoyl-sn-glycero-3-phosphocholine + hexadecanoyl-CoA = 1-dodecanoyl-2-hexadecanoyl-sn-glycero-3-phosphocholine + CoA. The enzyme catalyses 1-tetradecanoyl-sn-glycero-3-phosphocholine + hexadecanoyl-CoA = 1-tetradecanoyl-2-hexadecanoyl-sn-glycero-3-phosphocholine + CoA. The catalysed reaction is 1-O-octadecyl-sn-glycero-3-phosphocholine + hexadecanoyl-CoA = 1-O-octadecyl-2-hexadecanoyl-sn-glycero-3-phosphocholine + CoA. It catalyses the reaction 1-octadecanoyl-sn-glycero-3-phosphocholine + hexadecanoyl-CoA = 1-octadecanoyl-2-hexadecanoyl-sn-glycero-3-phosphocholine + CoA. It carries out the reaction 1-(9Z-octadecenoyl)-sn-glycero-3-phosphocholine + hexadecanoyl-CoA = 1-(9Z-octadecenoyl)-2-hexadecanoyl-sn-glycero-3-phosphocholine + CoA. The enzyme catalyses 1-eicosanoyl-sn-glycero-3-phosphocholine + hexadecanoyl-CoA = 1-eicosanoyl-2-hexadecanoyl-sn-glycero-3-phosphocholine + CoA. The catalysed reaction is hexanoyl-CoA + 1-hexadecanoyl-sn-glycero-3-phosphocholine = 1-hexadecanoyl-2-hexanoyl-sn-glycero-3-phosphocholine + CoA. It catalyses the reaction octanoyl-CoA + 1-hexadecanoyl-sn-glycero-3-phosphocholine = 1-hexadecanoyl-2-octanoyl-sn-glycero-3-phosphocholine + CoA. It carries out the reaction decanoyl-CoA + 1-hexadecanoyl-sn-glycero-3-phosphocholine = 1-hexadecanoyl-2-decanoyl-sn-glycero-3-phosphocholine + CoA. The enzyme catalyses dodecanoyl-CoA + 1-hexadecanoyl-sn-glycero-3-phosphocholine = 1-hexadecanoyl-2-dodecanoyl-sn-glycero-3-phosphocholine + CoA. The catalysed reaction is tetradecanoyl-CoA + 1-hexadecanoyl-sn-glycero-3-phosphocholine = 1-hexadecanoyl-2-tetradecanoyl-sn-glycero-3-phosphocholine + CoA. It catalyses the reaction (9Z,12Z)-octadecadienoyl-CoA + 1-hexadecanoyl-sn-glycero-3-phosphocholine = 1-hexadecanoyl-2-(9Z,12Z-octadecadienoyl)-sn-glycero-3-phosphocholine + CoA. It carries out the reaction (4Z,7Z,10Z,13Z,16Z,19Z)-docosahexaenoyl-CoA + 1-hexadecanoyl-sn-glycero-3-phosphocholine = 1-hexadecanoyl-2-(4Z,7Z,10Z,13Z,16Z,19Z-docosahexaenoyl)-sn-glycero-3-phosphocholine + CoA. The enzyme catalyses 1-hexadecanoyl-sn-glycero-3-phosphocholine + acetyl-CoA = 1-hexadecanoyl-2-acetyl-sn-glycero-3-phosphocholine + CoA. The catalysed reaction is eicosanoyl-CoA + 1-hexadecanoyl-sn-glycero-3-phosphocholine = 1-hexadecanoyl-2-eicosanoyl-sn-glycero-3-phosphocholine + CoA. It catalyses the reaction 1-O-hexadecyl-sn-glycero-3-phosphocholine + acetyl-CoA = 1-O-hexadecyl-2-acetyl-sn-glycero-3-phosphocholine + CoA. It carries out the reaction a 1-acyl-sn-glycero-3-phosphocholine + hexadecanoyl-CoA = 1-acyl-2-hexadecanoyl-sn-glycero-3-phosphocholine + CoA. The enzyme catalyses a 1-acyl-sn-glycero-3-phosphate + hexadecanoyl-CoA = 1-acyl-2-hexadecanoyl-sn-glycero-3-phosphate + CoA. The catalysed reaction is 1-acyl-sn-glycero-3-phospho-(1'-sn-glycerol) + hexadecanoyl-CoA = 1-acyl-2-hexadecanoyl-sn-glycero-3-phospho-(1'-sn-glycerol) + CoA. Its pathway is lipid metabolism; phospholipid metabolism. In terms of biological role, exhibits acyltransferase activity. Exhibits acetyltransferase activity. Activity is calcium-independent. Catalyzes the conversion of lysophosphatidylcholine (1-acyl-sn-glycero-3-phosphocholine or LPC) into phosphatidylcholine (1,2-diacyl-sn-glycero-3-phosphocholine or PC). Catalyzes the conversion 1-acyl-sn-glycerol-3-phosphate (lysophosphatidic acid or LPA) into 1,2-diacyl-sn-glycerol-3-phosphate (phosphatidic acid or PA) by incorporating an acyl moiety at the sn-2 position of the glycerol backbone. Displays a clear preference for saturated fatty acyl-CoAs, and 1-myristoyl or 1-palmitoyl LPC as acyl donors and acceptors, respectively. Involved in platelet-activating factor (PAF) biosynthesis by catalyzing the conversion of the PAF precursor, 1-O-alkyl-sn-glycero-3-phosphocholine (lyso-PAF) into 1-O-alkyl-2-acetyl-sn-glycero-3-phosphocholine (PAF). May synthesize phosphatidylcholine in pulmonary surfactant, thereby playing a pivotal role in respiratory physiology. Involved in the regulation of lipid droplet number and size. This is Lysophosphatidylcholine acyltransferase 1 (LPCAT1) from Homo sapiens (Human).